We begin with the raw amino-acid sequence, 179 residues long: Trypsin inhibitor (179 aa).

Glutamine 1 carries the post-translational modification Pyrrolidone carboxylic acid. 2 cysteine pairs are disulfide-bonded: cysteine 40–cysteine 85 and cysteine 132–cysteine 143.

This sequence belongs to the protease inhibitor I3 (leguminous Kunitz-type inhibitor) family. Heterodimer of an alpha and a beta chain linked by a disulfide bond. Abundant in dry seeds.

The protein localises to the secreted. In terms of biological role, inhibits trypsin, plasmin, human plasma kallikrein, chymotrypsin and factor XIIa activity. The sequence is that of Trypsin inhibitor from Leucaena leucocephala (White popinac).